Consider the following 1076-residue polypeptide: Nuclear factor of activated T-cells, cytoplasmic 3 (1076 aa).

At T2 the chain carries N-acetylthreonine. The interval 110 to 115 (PSIQIT) is calcineurin-binding. The interval 206 to 307 (LGSPLTSPGG…PGHSPRGSVT (102 aa)) is disordered. A run of 2 repeats spans residues 208 to 224 (SPLT…PGEE) and 237 to 253 (SPRQ…ITDE). Positions 208-309 (SPLTSPGGSP…HSPRGSVTED (102 aa)) are 3 X SP repeats. Over residues 237-254 (SPRQSPCHSPRSSITDEN) the composition is skewed to polar residues. The span at 257–271 (SPRPASGPSSRPTSP) shows a compositional bias: low complexity. Residues 274–276 (KRR) carry the Nuclear localization signal motif. Repeat unit 3 spans residues 293-309 (SPVPSPGHSPRGSVTED). S345 carries the post-translational modification Phosphoserine. The disordered stretch occupies residues 359 to 390 (CSDDQGSLSPSRETSVDDGLGSQYPLKKDSSG). Residues 362–371 (DQGSLSPSRE) show a composition bias toward polar residues. Position 373 is a phosphoserine (S373). Positions 416-597 (SSLPPLDWPL…IPVECSQRSA (182 aa)) constitute an RHD domain. Residues 445–452 (RAHYETEG) mediate DNA binding. The Nuclear localization signal motif lies at 687–689 (KRK). 2 disordered regions span residues 700-744 (PVLM…ALSA) and 863-987 (GHLL…GGLS). Over residues 713-722 (LSSVPSLPVP) the composition is skewed to low complexity. Composition is skewed to polar residues over residues 724–734 (SAQTQRPSSDT) and 888–911 (SAGQ…SHLQ). 2 stretches are compositionally biased toward low complexity: residues 917–939 (PSHP…SSPI) and 946–965 (QLQS…SPSP). A compositionally biased stretch (polar residues) spans 970–981 (HSGQHSTQAQST). Residues 1032–1041 (TLDDVNEIIG) carry the Nuclear export signal motif. Residues 1049–1076 (VSQGPEVIRDAPLPGPESPDVMSSNSAQ) form a disordered region. S1066 bears the Phosphoserine mark.

NFATC proteins bind to DNA as monomers. Member of the multicomponent NFATC transcription complex that consists of at least two components, a pre-existing cytoplasmic component NFATC2 and an inducible nuclear component NFATC1. Other members such as NFATC4, or members of the activating protein-1 family, MAF, GATA4 and Cbp/p300 can also bind the complex. Component of a promoter-binding complex composed of STAT3, NFATC3 and NFATC4; complex formation is enhanced by calcineurin. Interacts with TRIM17; this interaction prevents NFATC3 nuclear localization. Interacts with and ubiquitinated by STUB1/CHIP; HSPA1A/HSP70 is required as a co-chaperone. Phosphorylated by NFATC-kinase; dephosphorylated by calcineurin. Post-translationally, ubiquitinated by STUB1/CHIP, leading to proteasomal degradation. Expressed in cardiomyocytes (at protein level).

The protein localises to the cytoplasm. It is found in the nucleus. Functionally, acts as a regulator of transcriptional activation. Binds to the TNFSF11/RANKL promoter region and promotes TNFSF11 transcription. Binding to the TNFSF11 promoter region is increased by high levels of Ca(2+) which induce NFATC3 expression and may lead to regulation of TNFSF11 expression in osteoblasts. Plays a role in promoting mesenteric arterial wall remodeling in response to the intermittent hypoxia-induced increase in EDN1 and ROCK signaling. As a result NFATC3 colocalizes with F-actin filaments, translocates to the nucleus and promotes transcription of the smooth muscle hypertrophy and differentiation marker ACTA2. Promotes lipopolysaccharide-induced apoptosis and hypertrophy in cardiomyocytes. Following JAK/STAT signaling activation and as part of a complex with NFATC4 and STAT3, binds to the alpha-beta E4 promoter region of CRYAB and activates transcription in cardiomyocytes. In conjunction with NFATC4, involved in embryonic heart development via maintenance of cardiomyocyte survival, proliferation and differentiation. Plays a role in the inducible expression of cytokine genes in T-cells, especially in the induction of the IL-2. Required for thymocyte maturation during DN3 to DN4 transition and during positive selection. Positively regulates macrophage-derived polymicrobial clearance, via binding to the promoter region and promoting transcription of NOS2 resulting in subsequent generation of nitric oxide. Involved in Ca(2+)-mediated transcriptional responses upon Ca(2+) influx via ORAI1 CRAC channels. This chain is Nuclear factor of activated T-cells, cytoplasmic 3, found in Rattus norvegicus (Rat).